The sequence spans 379 residues: Cytochrome b (379 aa).

Transmembrane regions (helical) follow at residues 33 to 53 (FGSL…FLAM), 77 to 98 (WTIR…FIHV), 113 to 133 (WNVG…GYVL), and 178 to 198 (FFAL…IHLL). The heme b site is built by His-83 and His-97. Heme b-binding residues include His-182 and His-196. A ubiquinone is bound at residue His-201. The next 4 membrane-spanning stretches (helical) occupy residues 226–246 (TKDF…ALFY), 288–308 (LGGV…PFLQ), 320–340 (LSQF…WIGG), and 347–367 (FINI…FIMP).

The protein belongs to the cytochrome b family. As to quaternary structure, the cytochrome bc1 complex contains 11 subunits: 3 respiratory subunits (MT-CYB, CYC1 and UQCRFS1), 2 core proteins (UQCRC1 and UQCRC2) and 6 low-molecular weight proteins (UQCRH/QCR6, UQCRB/QCR7, UQCRQ/QCR8, UQCR10/QCR9, UQCR11/QCR10 and a cleavage product of UQCRFS1). This cytochrome bc1 complex then forms a dimer. Requires heme b as cofactor.

It localises to the mitochondrion inner membrane. Functionally, component of the ubiquinol-cytochrome c reductase complex (complex III or cytochrome b-c1 complex) that is part of the mitochondrial respiratory chain. The b-c1 complex mediates electron transfer from ubiquinol to cytochrome c. Contributes to the generation of a proton gradient across the mitochondrial membrane that is then used for ATP synthesis. This chain is Cytochrome b (MT-CYB), found in Lepilemur dorsalis (Grey-backed sportive lemur).